The primary structure comprises 211 residues: Ribonuclease T (211 aa).

Residues 24–198 enclose the Exonuclease domain; the sequence is VVVDVETGGF…YDAEKTAHLF (175 aa). Mg(2+) is bound by residues Asp-27, Glu-29, His-185, and Asp-190. His-185 (proton donor/acceptor) is an active-site residue.

The protein belongs to the RNase T family. As to quaternary structure, homodimer. Mg(2+) is required as a cofactor.

Its function is as follows. Trims short 3' overhangs of a variety of RNA species, leaving a one or two nucleotide 3' overhang. Responsible for the end-turnover of tRNA: specifically removes the terminal AMP residue from uncharged tRNA (tRNA-C-C-A). Also appears to be involved in tRNA biosynthesis. This is Ribonuclease T from Xylella fastidiosa (strain Temecula1 / ATCC 700964).